The following is a 255-amino-acid chain: Glioma pathogenesis-related protein 1 (255 aa).

The signal sequence occupies residues 1–17 (MQVILAVIVWMASSVSS). One can recognise an SCP domain in the interval 39–164 (QVHNQLRSKV…PNGANFICDY (126 aa)). The chain crosses the membrane as a helical span at residues 224–244 (SLFLIAKSVLLLLSVIITIWV).

This sequence belongs to the CRISP family.

The protein localises to the membrane. This is Glioma pathogenesis-related protein 1 (Glipr1) from Mus musculus (Mouse).